A 556-amino-acid polypeptide reads, in one-letter code: 2-succinyl-5-enolpyruvyl-6-hydroxy-3-cyclohexene-1-carboxylate synthase (556 aa).

This sequence belongs to the TPP enzyme family. MenD subfamily. As to quaternary structure, homodimer. The cofactor is Mg(2+). It depends on Mn(2+) as a cofactor. Thiamine diphosphate is required as a cofactor.

The enzyme catalyses isochorismate + 2-oxoglutarate + H(+) = 5-enolpyruvoyl-6-hydroxy-2-succinyl-cyclohex-3-ene-1-carboxylate + CO2. It participates in quinol/quinone metabolism; 1,4-dihydroxy-2-naphthoate biosynthesis; 1,4-dihydroxy-2-naphthoate from chorismate: step 2/7. The protein operates within quinol/quinone metabolism; menaquinone biosynthesis. Catalyzes the thiamine diphosphate-dependent decarboxylation of 2-oxoglutarate and the subsequent addition of the resulting succinic semialdehyde-thiamine pyrophosphate anion to isochorismate to yield 2-succinyl-5-enolpyruvyl-6-hydroxy-3-cyclohexene-1-carboxylate (SEPHCHC). This is 2-succinyl-5-enolpyruvyl-6-hydroxy-3-cyclohexene-1-carboxylate synthase from Salmonella arizonae (strain ATCC BAA-731 / CDC346-86 / RSK2980).